Consider the following 216-residue polypeptide: MSIALKQVFNKDKTFRPKRKFEPGTQRFELHKRAQASLNSGVDLRAAVQLPNGEDQNDWVAVHVVDFFNRINLIYGTICEFCTERTCPVMSGGPKYEYRWQDDLKYKKPTALPAPQYMNLLMDWIEVQINNEDIFPTCVGVPFPKNFLQICKKILCRLFRVFVHVYIHHFDRVIVMGAEAHVNTCYKHFYYFVTEMNLIDRKELEPLKEMTTRMCH.

Positions 82, 87, 164, and 169 each coordinate Zn(2+).

Modulates LATS1 expression in the Hippo signaling pathway which plays a pivotal role in organ size control and tumor suppression by restricting proliferation and promoting apoptosis. This Mus musculus (Mouse) protein is MOB kinase activator 3B (Mob3b).